A 617-amino-acid polypeptide reads, in one-letter code: V-type proton ATPase catalytic subunit A (617 aa).

T136 carries the phosphothreonine modification. Residue 250 to 257 (GAFGCGKT) participates in ATP binding. At S384 the chain carries Phosphoserine; by AMPK.

This sequence belongs to the ATPase alpha/beta chains family. As to quaternary structure, V-ATPase is a heteromultimeric enzyme made up of two complexes: the ATP-hydrolytic V1 complex and the proton translocation V0 complex. The V1 complex consists of three catalytic AB heterodimers that form a heterohexamer, three peripheral stalks each consisting of EG heterodimers, one central rotor including subunits D and F, and the regulatory subunits C and H. The proton translocation complex V0 consists of the proton transport subunit a, a ring of proteolipid subunits c9c'', rotary subunit d, subunits e and f, and the accessory subunits ATP6AP1/Ac45 and ATP6AP2/PRR. Interacts with the V0 complex V-ATPase subunit a4 ATP6V0A4. Interacts with WFS1. Interacts with alpha-crystallin B chain/CRYAB and with MTOR, forming a ternary complex. Phosphorylation at Ser-384 by AMPK down-regulates its enzyme activity.

It localises to the cytoplasm. The protein resides in the cytosol. The protein localises to the cytoplasmic vesicle. It is found in the secretory vesicle. Its subcellular location is the clathrin-coated vesicle membrane. It localises to the lysosome. The enzyme catalyses ATP + H2O + 4 H(+)(in) = ADP + phosphate + 5 H(+)(out). With respect to regulation, ATP hydrolysis occurs at the interface between the nucleotide-binding domains of subunits A and B. ATP hydrolysis triggers a conformational change in the subunits D and F, which induces a shift of subunit d. The c-ring is subsequently rotated and results in a continuous proton translocation across the membrane. In terms of biological role, catalytic subunit of the V1 complex of vacuolar(H+)-ATPase (V-ATPase), a multisubunit enzyme composed of a peripheral complex (V1) that hydrolyzes ATP and a membrane integral complex (V0) that translocates protons. V-ATPase is responsible for acidifying and maintaining the pH of intracellular compartments and in some cell types, is targeted to the plasma membrane, where it is responsible for acidifying the extracellular environment. In aerobic conditions, involved in intracellular iron homeostasis, thus triggering the activity of Fe(2+) prolyl hydroxylase (PHD) enzymes, and leading to HIF1A hydroxylation and subsequent proteasomal degradation. May play a role in neurite development and synaptic connectivity. This chain is V-type proton ATPase catalytic subunit A (ATP6V1A), found in Pongo abelii (Sumatran orangutan).